The primary structure comprises 113 residues: MISSVQNVSNLSMTRALGAVDTENSASSSAATMPGTAGAANNMSFASVMGNMASDAVSSLKGAESMSFAGIKGTATTREVVDSMLQAEQTLQTAIAIRDKVVSAFLEVTKMQM.

This sequence belongs to the FliE family.

It localises to the bacterial flagellum basal body. This Rhizobium leguminosarum bv. trifolii (strain WSM2304) protein is Flagellar hook-basal body complex protein FliE.